The chain runs to 257 residues: Microfibril-associated glycoprotein 4 (257 aa).

An N-terminal signal peptide occupies residues 1 to 22 (MKALPALPLMLMLLSMPPPCAP). Positions 28–30 (RGD) match the Cell attachment site motif. One can recognise a Fibrinogen C-terminal domain in the interval 34 to 257 (KSCLQQPLDC…KRTEMKIRRA (224 aa)). N-linked (GlcNAc...) asparagine glycosylation is found at asparagine 89 and asparagine 139.

Homodimer. Can also form higher oligomers. Interacts with FBN1, FBN2 and LOX. Interacts with COL1A1 in a Ca (2+)-dependent manner. Interacts with ELN in a Ca (2+)-dependent manner; this interaction promotes ELN self-assembly.

The protein localises to the secreted. It localises to the extracellular space. It is found in the extracellular matrix. In terms of biological role, could be involved in calcium-dependent cell adhesion or intercellular interactions. May contribute to the elastic fiber assembly and/or maintenance. The chain is Microfibril-associated glycoprotein 4 (Mfap4) from Mus musculus (Mouse).